The chain runs to 485 residues: D-alanine--D-alanyl carrier protein ligase (485 aa).

144–145 (TS) provides a ligand contact to ATP. Asp-189 contacts D-alanine. 284-289 (NTYGPT) lines the ATP pocket. Val-293 contributes to the D-alanine binding site. 2 residues coordinate ATP: Asp-365 and Lys-473. Lys-473 lines the D-alanine pocket.

It belongs to the ATP-dependent AMP-binding enzyme family. DltA subfamily.

Its subcellular location is the cytoplasm. The enzyme catalyses holo-[D-alanyl-carrier protein] + D-alanine + ATP = D-alanyl-[D-alanyl-carrier protein] + AMP + diphosphate. It participates in cell wall biogenesis; lipoteichoic acid biosynthesis. Functionally, catalyzes the first step in the D-alanylation of lipoteichoic acid (LTA), the activation of D-alanine and its transfer onto the D-alanyl carrier protein (Dcp) DltC. In an ATP-dependent two-step reaction, forms a high energy D-alanyl-AMP intermediate, followed by transfer of the D-alanyl residue as a thiol ester to the phosphopantheinyl prosthetic group of the Dcp. D-alanylation of LTA plays an important role in modulating the properties of the cell wall in Gram-positive bacteria, influencing the net charge of the cell wall. In Staphylococcus aureus (strain MRSA252), this protein is D-alanine--D-alanyl carrier protein ligase.